Here is a 979-residue protein sequence, read N- to C-terminus: UPF0182 protein Mb0065 (979 aa).

The next 7 helical transmembrane spans lie at 19–41, 63–85, 114–136, 174–196, 208–230, 261–280, and 285–307; these read LVTAGMGMLALLLFGPRLVDIYV, LAIVAAVALVVAGIVLAALLLAY, LFGWGIAVTLGVVCGLIASFDWV, WLFVAVVLAFLASLLTHYLFGGL, AARVQLAVFAGAVVLLKAVAYWL, LVLVAIAVLCAVSFFTAIFL, and IPAMAAALLVLSAILVGGLWPLL. The segment at 898-948 is disordered; it reads GTGRVATAPGGDAASAPPPGAGGPAPPQAVPPPRTTQPPAAPPRGPDVPPA. Over residues 902–912 the composition is skewed to low complexity; it reads VATAPGGDAAS. Pro residues predominate over residues 913-946; sequence APPPGAGGPAPPQAVPPPRTTQPPAAPPRGPDVP.

The protein belongs to the UPF0182 family.

The protein resides in the cell membrane. The polypeptide is UPF0182 protein Mb0065 (Mycobacterium bovis (strain ATCC BAA-935 / AF2122/97)).